The chain runs to 251 residues: uncharacterized protein (251 aa).

The protein belongs to the PaiB family.

This is an uncharacterized protein from Emericella nidulans (strain FGSC A4 / ATCC 38163 / CBS 112.46 / NRRL 194 / M139) (Aspergillus nidulans).